Consider the following 96-residue polypeptide: U-reduvitoxin-Pr12a (96 aa).

An N-terminal signal peptide occupies residues 1–20 (MKTALLLFFALVFIAFETEA). 3 disulfide bridges follow: Cys21–Cys38, Cys33–Cys53, and Cys36–Cys47. Pacifastin domains lie at 21 to 55 (CRPG…ICPP) and 59 to 94 (KLEC…CIHK). The interval 54-56 (PPR) is pro-Pro-Arg motif necessary for proteolytic processing. Intrachain disulfides connect Cys62–Cys77, Cys72–Cys91, and Cys75–Cys86.

This sequence belongs to the protease inhibitor I19 family. In terms of tissue distribution, expressed by the venom gland.

It is found in the secreted. Inhibits trypsin activity and prophenoloxidase (PPO) activation, an enzyme essential for both clotting and insect innate immune responses. It does not inhibit activity of chymotrypsin and protease K, and has no effect on phenoloxidase (PO) activity. The protein is U-reduvitoxin-Pr12a of Platymeris rhadamanthus (Red spot assassin bug).